We begin with the raw amino-acid sequence, 444 residues long: Trigger factor (444 aa).

One can recognise a PPIase FKBP-type domain in the interval 163–248; that stretch reads GDIAVIDSPV…VKELRKNVPA (86 aa).

The protein belongs to the FKBP-type PPIase family. Tig subfamily.

Its subcellular location is the cytoplasm. It catalyses the reaction [protein]-peptidylproline (omega=180) = [protein]-peptidylproline (omega=0). Functionally, involved in protein export. Acts as a chaperone by maintaining the newly synthesized protein in an open conformation. Functions as a peptidyl-prolyl cis-trans isomerase. The sequence is that of Trigger factor (tig) from Azospirillum brasilense.